The sequence spans 329 residues: GTP 3',8-cyclase (329 aa).

One can recognise a Radical SAM core domain in the interval 8-234 (AFARKFYYLR…QLRSRADGPA (227 aa)). Arg-17 contributes to the GTP binding site. Residues Cys-24 and Cys-28 each contribute to the [4Fe-4S] cluster site. Tyr-30 contacts S-adenosyl-L-methionine. Cys-31 is a binding site for [4Fe-4S] cluster. Arg-68 is a binding site for GTP. An S-adenosyl-L-methionine-binding site is contributed by Gly-72. Thr-99 contributes to the GTP binding site. Ser-123 contributes to the S-adenosyl-L-methionine binding site. Lys-160 is a GTP binding site. S-adenosyl-L-methionine is bound at residue Met-194. 2 residues coordinate [4Fe-4S] cluster: Cys-257 and Cys-260. 262-264 (RLR) serves as a coordination point for GTP. A [4Fe-4S] cluster-binding site is contributed by Cys-274.

Belongs to the radical SAM superfamily. MoaA family. As to quaternary structure, monomer and homodimer. The cofactor is [4Fe-4S] cluster.

The enzyme catalyses GTP + AH2 + S-adenosyl-L-methionine = (8S)-3',8-cyclo-7,8-dihydroguanosine 5'-triphosphate + 5'-deoxyadenosine + L-methionine + A + H(+). Its pathway is cofactor biosynthesis; molybdopterin biosynthesis. In terms of biological role, catalyzes the cyclization of GTP to (8S)-3',8-cyclo-7,8-dihydroguanosine 5'-triphosphate. The protein is GTP 3',8-cyclase of Cronobacter sakazakii (strain ATCC BAA-894) (Enterobacter sakazakii).